The following is a 154-amino-acid chain: D-aminoacyl-tRNA deacylase (154 aa).

Positions Gly137–Pro138 match the Gly-cisPro motif, important for rejection of L-amino acids motif.

It belongs to the DTD family. In terms of assembly, homodimer.

It localises to the cytoplasm. The enzyme catalyses glycyl-tRNA(Ala) + H2O = tRNA(Ala) + glycine + H(+). It carries out the reaction a D-aminoacyl-tRNA + H2O = a tRNA + a D-alpha-amino acid + H(+). In terms of biological role, an aminoacyl-tRNA editing enzyme that deacylates mischarged D-aminoacyl-tRNAs. Also deacylates mischarged glycyl-tRNA(Ala), protecting cells against glycine mischarging by AlaRS. Acts via tRNA-based rather than protein-based catalysis; rejects L-amino acids rather than detecting D-amino acids in the active site. By recycling D-aminoacyl-tRNA to D-amino acids and free tRNA molecules, this enzyme counteracts the toxicity associated with the formation of D-aminoacyl-tRNA entities in vivo and helps enforce protein L-homochirality. This Thermomicrobium roseum (strain ATCC 27502 / DSM 5159 / P-2) protein is D-aminoacyl-tRNA deacylase.